The chain runs to 357 residues: UPF0283 membrane protein HS_0596 (357 aa).

3 helical membrane passes run 67–87 (LMATICLFSCGILAQSVQWLV), 96–116 (IAFVFAMVSLFLVLLGLGAII), and 213–233 (AVESALIVAVSPLAIVDMFFI).

It belongs to the UPF0283 family.

The protein localises to the cell inner membrane. This is UPF0283 membrane protein HS_0596 from Histophilus somni (strain 129Pt) (Haemophilus somnus).